We begin with the raw amino-acid sequence, 215 residues long: Ribonuclease HII (215 aa).

The 192-residue stretch at 24–215 folds into the RNase H type-2 domain; the sequence is GVVFGVDEVG…PIRQFYENVD (192 aa). A divalent metal cation contacts are provided by D30, E31, and D125.

Belongs to the RNase HII family. It depends on Mn(2+) as a cofactor. Mg(2+) serves as cofactor.

The protein resides in the cytoplasm. The enzyme catalyses Endonucleolytic cleavage to 5'-phosphomonoester.. Functionally, endonuclease that specifically degrades the RNA of RNA-DNA hybrids. The polypeptide is Ribonuclease HII (Zymomonas mobilis subsp. mobilis (strain ATCC 31821 / ZM4 / CP4)).